Reading from the N-terminus, the 596-residue chain is Elongation factor 4 (596 aa).

A tr-type G domain is found at 2-184 (KHIRNFSIIA…VIVAQIPPPE (183 aa)). GTP contacts are provided by residues 14-19 (DHGKST) and 131-134 (NKID).

It belongs to the TRAFAC class translation factor GTPase superfamily. Classic translation factor GTPase family. LepA subfamily.

The protein resides in the cell inner membrane. The enzyme catalyses GTP + H2O = GDP + phosphate + H(+). In terms of biological role, required for accurate and efficient protein synthesis under certain stress conditions. May act as a fidelity factor of the translation reaction, by catalyzing a one-codon backward translocation of tRNAs on improperly translocated ribosomes. Back-translocation proceeds from a post-translocation (POST) complex to a pre-translocation (PRE) complex, thus giving elongation factor G a second chance to translocate the tRNAs correctly. Binds to ribosomes in a GTP-dependent manner. The sequence is that of Elongation factor 4 from Shewanella woodyi (strain ATCC 51908 / MS32).